The chain runs to 506 residues: uncharacterized protein (506 aa).

The protein to R.prowazekii RP789, RP027 and RP028.

This is an uncharacterized protein from Synechocystis sp. (strain ATCC 27184 / PCC 6803 / Kazusa).